The following is a 475-amino-acid chain: E3 ubiquitin-protein ligase TRIM62 (475 aa).

The segment at 11–54 (CSICLSIYQDPVSLGCEHYFCRRCITEHWVRQEAQGARDCPECR) adopts an RING-type zinc-finger fold. A B box-type zinc finger spans residues 88–128 (RAARPCQAHDKVKLFCLTDRALLCFFCDEPALHEQHQVTGI). Zn(2+) contacts are provided by C93, H96, C114, and H120. Residues 127–241 (GIDDAFDELQ…LQERLAETDR (115 aa)) are a coiled coil. One can recognise a B30.2/SPRY domain in the interval 277-475 (PLQYTIWKSL…QPLRINTVRI (199 aa)).

The protein belongs to the TRIM/RBCC family. In terms of assembly, interacts with the ubiquitin-conjugating enzyme, UBE2D2. Polyubiquitinated, autoubiquitinated in the presence of UBE2D2.

The protein localises to the cytoplasm. It carries out the reaction S-ubiquitinyl-[E2 ubiquitin-conjugating enzyme]-L-cysteine + [acceptor protein]-L-lysine = [E2 ubiquitin-conjugating enzyme]-L-cysteine + N(6)-ubiquitinyl-[acceptor protein]-L-lysine.. Its pathway is protein modification; protein ubiquitination. Functionally, E3 ubiquitin ligase that plays a role in antifungal immunity by mediating 'Lys-27'-linked ubiquitination of CARD9 downstream of C-type lectin receptors; leading to CARD9 activation, followed by activation of NF-kappa-B and MAP kinase p38 pathways. E3 ubiquitin ligase activity is dependent on E2 ubiquitin-conjugating enzyme UBE2D2. In Homo sapiens (Human), this protein is E3 ubiquitin-protein ligase TRIM62.